The primary structure comprises 1254 residues: Zinc finger protein BRUTUS-like At1g18910 (1254 aa).

The segment at 1–30 is disordered; the sequence is MGVGDPLPLPPEKNRREVNKPPDIASTSSS. Residues 454–474 form a helical membrane-spanning segment; sequence IHFLPLGLLKCVIMWFSAQLP. The CHY-type zinc finger occupies 1013-1082; it reads PHKLIFGCKH…ASCSNISCSS (70 aa). Zn(2+) is bound by residues Cys-1020, His-1022, Cys-1033, Cys-1034, Cys-1040, Cys-1043, His-1044, His-1050, Cys-1062, Cys-1065, Cys-1075, Cys-1080, Cys-1089, Cys-1092, His-1103, Cys-1104, Cys-1107, Cys-1110, His-1122, Cys-1123, Cys-1126, Cys-1129, His-1137, and Cys-1139. The segment at 1084-1147 adopts a CTCHY-type zinc-finger fold; sequence MGKYYCKICK…VCREKCLEDN (64 aa). An RING-type; atypical zinc finger spans residues 1148–1190; sequence CPICHEYIFTSNSPVKALPCGHVMHSTCFQEYTCSHYTCPICS.

Binds zinc and iron ions.

The protein localises to the membrane. It localises to the nucleus. Its pathway is protein modification; protein ubiquitination. Its function is as follows. Probable E3 ubiquitin-protein ligase that may regulate the response to iron deficiency and thus contributes to iron homeostasis. In Arabidopsis thaliana (Mouse-ear cress), this protein is Zinc finger protein BRUTUS-like At1g18910.